The chain runs to 176 residues: Magnesium-dependent phosphatase 1 (176 aa).

The Nucleophile role is filled by Asp-11. Asp-11 is a Mg(2+) binding site. Phosphate-binding residues include Leu-12 and Asp-13. Asp-13 lines the Mg(2+) pocket. The active-site Proton donor is the Asp-13. Residue Trp-20 participates in substrate binding. 3 residues coordinate phosphate: Ser-69, Arg-70, and Lys-100. Arg-70 provides a ligand contact to substrate. Position 123 (Asp-123) interacts with Mg(2+).

The protein belongs to the HAD-like hydrolase superfamily. Requires Mg(2+) as cofactor.

It carries out the reaction O-phospho-L-tyrosyl-[protein] + H2O = L-tyrosyl-[protein] + phosphate. Its activity is regulated as follows. Inhibited by vanadate and zinc, and slightly by calcium. Its function is as follows. Magnesium-dependent phosphatase which may act as a tyrosine phosphatase. The polypeptide is Magnesium-dependent phosphatase 1 (MDP1) (Homo sapiens (Human)).